Consider the following 777-residue polypeptide: Elongation factor G, mitochondrial (777 aa).

Residues 34-338 enclose the tr-type G domain; the sequence is LRQRNVGISA…GMCAYLPNPM (305 aa). Residues 43–50, 136–140, and 190–193 each bind GTP; these read AHIDSGKT, DTPGH, and NKMD.

Belongs to the TRAFAC class translation factor GTPase superfamily. Classic translation factor GTPase family. EF-G/EF-2 subfamily.

It is found in the mitochondrion. It participates in protein biosynthesis; polypeptide chain elongation. Functionally, mitochondrial GTPase that catalyzes the GTP-dependent ribosomal translocation step during translation elongation. During this step, the ribosome changes from the pre-translocational (PRE) to the post-translocational (POST) state as the newly formed A-site-bound peptidyl-tRNA and P-site-bound deacylated tRNA move to the P and E sites, respectively. Catalyzes the coordinated movement of the two tRNA molecules, the mRNA and conformational changes in the ribosome. This Malassezia globosa (strain ATCC MYA-4612 / CBS 7966) (Dandruff-associated fungus) protein is Elongation factor G, mitochondrial.